The primary structure comprises 213 residues: MVLLLNCIVAVDQNMGIGKKGHLPWPLLINDFKYFQRMTTSSVKNKQNLVIMGKNTWFSIPEKNRPLKDRINLVLSKKLKEIPHGAHFLARSLNDALKLIEQPELVNKVDRVWIIGGSSVYKDAMNYSSHLKLFVTRIMQSFETDTFFPEIDLKNYKLLIEYPGVPSNTQEEKGIKYKFEVYEKIVNTFLFKSHAGLTCSVKPKEASYDFELS.

The DHFR domain occupies 4-184 (LLNCIVAVDQ…IKYKFEVYEK (181 aa)). NADP(+)-binding positions include alanine 10 and 16-22 (GIGKKGH). Substrate is bound at residue 31–36 (DFKYFQ). An NADP(+)-binding site is contributed by 54-56 (KNT). Position 70 (arginine 70) interacts with substrate. NADP(+)-binding positions include 76-78 (SKK) and 116-123 (GGSSVYKD).

This sequence belongs to the dihydrofolate reductase family.

The catalysed reaction is (6S)-5,6,7,8-tetrahydrofolate + NADP(+) = 7,8-dihydrofolate + NADPH + H(+). Its pathway is cofactor biosynthesis; tetrahydrofolate biosynthesis; 5,6,7,8-tetrahydrofolate from 7,8-dihydrofolate: step 1/1. Key enzyme in folate metabolism. Catalyzes an essential reaction for de novo glycine and purine synthesis, and for DNA precursor synthesis. The chain is Viral dihydrofolate reductase (DHFR) from Saimiri sciureus (Common squirrel monkey).